A 660-amino-acid chain; its full sequence is Bifunctional polymyxin resistance protein ArnA (660 aa).

Residues 1 to 304 (MKAVIFAYHD…TLGLVAGACL (304 aa)) form a formyltransferase ArnAFT region. Histidine 104 acts as the Proton donor; for formyltransferase activity in catalysis. (6R)-10-formyltetrahydrofolate contacts are provided by residues arginine 114 and 136–140 (VKRAD). A dehydrogenase ArnADH region spans residues 314 to 660 (RRIRVLILGV…RSVDIAERAS (347 aa)). NAD(+) contacts are provided by residues aspartate 347 and 368-369 (DI). Residues alanine 393, tyrosine 398, and 432-433 (TS) each bind UDP-alpha-D-glucuronate. The Proton acceptor; for decarboxylase activity role is filled by glutamate 434. Residues arginine 460, asparagine 492, 526-535 (KLIDGGQQKR), and tyrosine 613 contribute to the UDP-alpha-D-glucuronate site. The active-site Proton donor; for decarboxylase activity is arginine 619.

The protein in the N-terminal section; belongs to the Fmt family. UDP-L-Ara4N formyltransferase subfamily. In the C-terminal section; belongs to the NAD(P)-dependent epimerase/dehydratase family. UDP-glucuronic acid decarboxylase subfamily. As to quaternary structure, homohexamer, formed by a dimer of trimers.

It catalyses the reaction UDP-alpha-D-glucuronate + NAD(+) = UDP-beta-L-threo-pentopyranos-4-ulose + CO2 + NADH. It carries out the reaction UDP-4-amino-4-deoxy-beta-L-arabinose + (6R)-10-formyltetrahydrofolate = UDP-4-deoxy-4-formamido-beta-L-arabinose + (6S)-5,6,7,8-tetrahydrofolate + H(+). The protein operates within nucleotide-sugar biosynthesis; UDP-4-deoxy-4-formamido-beta-L-arabinose biosynthesis; UDP-4-deoxy-4-formamido-beta-L-arabinose from UDP-alpha-D-glucuronate: step 1/3. It functions in the pathway nucleotide-sugar biosynthesis; UDP-4-deoxy-4-formamido-beta-L-arabinose biosynthesis; UDP-4-deoxy-4-formamido-beta-L-arabinose from UDP-alpha-D-glucuronate: step 3/3. It participates in bacterial outer membrane biogenesis; lipopolysaccharide biosynthesis. Functionally, bifunctional enzyme that catalyzes the oxidative decarboxylation of UDP-glucuronic acid (UDP-GlcUA) to UDP-4-keto-arabinose (UDP-Ara4O) and the addition of a formyl group to UDP-4-amino-4-deoxy-L-arabinose (UDP-L-Ara4N) to form UDP-L-4-formamido-arabinose (UDP-L-Ara4FN). The modified arabinose is attached to lipid A and is required for resistance to polymyxin and cationic antimicrobial peptides. In Salmonella paratyphi A (strain ATCC 9150 / SARB42), this protein is Bifunctional polymyxin resistance protein ArnA.